The chain runs to 222 residues: 7-cyano-7-deazaguanine synthase (222 aa).

14–24 (FSGGQDSTTCL) lines the ATP pocket. Cys-192, Cys-201, Cys-204, and Cys-207 together coordinate Zn(2+).

This sequence belongs to the QueC family. In terms of assembly, homodimer. It depends on Zn(2+) as a cofactor.

It catalyses the reaction 7-carboxy-7-deazaguanine + NH4(+) + ATP = 7-cyano-7-deazaguanine + ADP + phosphate + H2O + H(+). Its pathway is purine metabolism; 7-cyano-7-deazaguanine biosynthesis. In terms of biological role, catalyzes the ATP-dependent conversion of 7-carboxy-7-deazaguanine (CDG) to 7-cyano-7-deazaguanine (preQ(0)). This is 7-cyano-7-deazaguanine synthase from Clostridium acetobutylicum (strain ATCC 824 / DSM 792 / JCM 1419 / IAM 19013 / LMG 5710 / NBRC 13948 / NRRL B-527 / VKM B-1787 / 2291 / W).